The chain runs to 536 residues: Coilin (536 aa).

The interval A96–S316 is disordered. Residues K171 to K180 are compositionally biased toward basic residues. The span at K181–K192 shows a compositional bias: basic and acidic residues. Over residues Q213–Q238 the composition is skewed to low complexity. 2 stretches are compositionally biased toward polar residues: residues S239–V257 and T303–S316. Tandem repeats lie at residues R353–G358 and R380–G385. A 2 X 6 AA repeats of R-G-R-G-R-G region spans residues R353–G385. The tract at residues G368–S387 is disordered. Residues F371–R380 are compositionally biased toward low complexity. One can recognise a Tudor; atypical domain in the interval D425–E523.

The protein belongs to the coilin family. In terms of tissue distribution, expressed in both oocytes and somatic cells.

It is found in the nucleus. In Xenopus laevis (African clawed frog), this protein is Coilin (coil).